The primary structure comprises 194 residues: Adenylate kinase (194 aa).

10-15 is an ATP binding site; it reads GAGKGT. Residues 30 to 59 form an NMP region; sequence STGDMLRAAVAQQSEIGKRAKAVMDAGQLV. AMP-binding positions include Thr31, Arg36, 57–59, 85–88, and Gln92; these read QLV and GYPR. An LID region spans residues 126-142; the sequence is SRVAETIAKGAQVRSDD. Position 127 (Arg127) interacts with ATP. 2 residues coordinate AMP: Arg139 and Arg150. Ala178 contacts ATP.

The protein belongs to the adenylate kinase family. As to quaternary structure, monomer.

The protein resides in the cytoplasm. It catalyses the reaction AMP + ATP = 2 ADP. Its pathway is purine metabolism; AMP biosynthesis via salvage pathway; AMP from ADP: step 1/1. Catalyzes the reversible transfer of the terminal phosphate group between ATP and AMP. Plays an important role in cellular energy homeostasis and in adenine nucleotide metabolism. The sequence is that of Adenylate kinase from Brucella melitensis biotype 1 (strain ATCC 23456 / CCUG 17765 / NCTC 10094 / 16M).